Reading from the N-terminus, the 121-residue chain is Small ribosomal subunit protein uS13 (121 aa).

The segment at Pro-96–Lys-121 is disordered. Positions Ala-106–Lys-121 are enriched in basic residues.

It belongs to the universal ribosomal protein uS13 family. In terms of assembly, part of the 30S ribosomal subunit. Forms a loose heterodimer with protein S19. Forms two bridges to the 50S subunit in the 70S ribosome.

In terms of biological role, located at the top of the head of the 30S subunit, it contacts several helices of the 16S rRNA. In the 70S ribosome it contacts the 23S rRNA (bridge B1a) and protein L5 of the 50S subunit (bridge B1b), connecting the 2 subunits; these bridges are implicated in subunit movement. Contacts the tRNAs in the A and P-sites. The protein is Small ribosomal subunit protein uS13 of Streptococcus pyogenes serotype M3 (strain SSI-1).